The chain runs to 706 residues: Forkhead box protein P2 (706 aa).

The span at 1 to 28 (MMQESATETISNSSMNQNGMSTLSSQLD) shows a compositional bias: polar residues. 2 disordered regions span residues 1-45 (MMQE…SEVS) and 275-305 (IKHG…ITHH). Low complexity predominate over residues 287–296 (SSSTTSTTTS). The segment at 337–362 (GVCKWPGCENICEDFGQFLKHLNNEH) adopts a C2H2-type zinc-finger fold. The tract at residues 379 to 400 (VQQLEIQLSKERERLQAMMTHL) is leucine-zipper. Residues 413-417 (PLNLV) form a ctbp1-binding region. The segment at residues 495 to 585 (RPPFTYATLI…SQKITASPTL (91 aa)) is a DNA-binding region (fork-head). A disordered region spans residues 672-706 (DDEDCPMSLVTTANHSPELEEDRELEEEPLSEDLE). A compositionally biased stretch (acidic residues) spans 690-706 (LEEDRELEEEPLSEDLE).

In terms of assembly, dimerization is required for DNA-binding. At stage 15, expressed in the anterior/superior eye field and the caudal branchial arch. At later stages, expression persists in the retina and in the caudal branchial arch. Expressed in the pronephros and the tip of the tail. Beginning with stage 35, expression in the brain is localized to distinct subdomains of the anterior prosencephalon, the medial mesencephalon and to lateral domains of the hindbrain.

The protein resides in the nucleus. Its function is as follows. Transcriptional repressor. In Xenopus laevis (African clawed frog), this protein is Forkhead box protein P2.